A 337-amino-acid polypeptide reads, in one-letter code: F420-dependent glucose-6-phosphate dehydrogenase (337 aa).

Asp40 lines the coenzyme F420-(gamma-Glu)n pocket. Residue His41 is the Proton donor of the active site. Coenzyme F420-(gamma-Glu)n is bound by residues Thr77 and 108-109 (SG). Glu110 acts as the Proton acceptor in catalysis. Coenzyme F420-(gamma-Glu)n-binding positions include Asn113, 178-179 (GG), and 181-182 (VV). Residues Thr196, Lys199, Lys260, and Arg284 each contribute to the substrate site.

The protein belongs to the F420-dependent glucose-6-phosphate dehydrogenase family. In terms of assembly, homodimer.

The enzyme catalyses oxidized coenzyme F420-(gamma-L-Glu)(n) + D-glucose 6-phosphate + H(+) = 6-phospho-D-glucono-1,5-lactone + reduced coenzyme F420-(gamma-L-Glu)(n). Its function is as follows. Catalyzes the coenzyme F420-dependent oxidation of glucose 6-phosphate (G6P) to 6-phosphogluconolactone. In Rhodococcus erythropolis (strain PR4 / NBRC 100887), this protein is F420-dependent glucose-6-phosphate dehydrogenase.